Consider the following 589-residue polypeptide: Splicing factor U2af large subunit B (589 aa).

Positions 1–195 (MMSYEGNGDG…KRRSGFDMAP (195 aa)) are disordered. The span at 14–27 (STENHNENYISLES) shows a compositional bias: polar residues. 2 stretches are compositionally biased toward basic and acidic residues: residues 29–100 (PFHE…DRQR) and 109–145 (RDRSRERSEKRDDLDDDHHRRSRDRDRRRSRDRDREV). Basic residues-rich tracts occupy residues 146-156 (RHRRRSRSRSR) and 164-188 (RSEHRHKSEHRSRSRSRSRSKSKRR). RRM domains lie at 255–338 (RRVY…RPTD), 375–453 (DRIF…RAIQ), and 494–580 (QVVT…YPED).

It belongs to the splicing factor SR family. As to quaternary structure, component of the spliceosome. Interacts with SF1 in the nucleus.

The protein localises to the nucleus. Its subcellular location is the nucleus speckle. Necessary for the splicing of pre-mRNA. This is Splicing factor U2af large subunit B from Arabidopsis thaliana (Mouse-ear cress).